A 209-amino-acid chain; its full sequence is Peptide methionine sulfoxide reductase MsrA (209 aa).

Cys14 is a catalytic residue. The tract at residues 183–209 is disordered; sequence FSALTTGGNQPGARGGLTNNTCQHPRH. Residues 199-209 are compositionally biased toward polar residues; the sequence is LTNNTCQHPRH.

Belongs to the MsrA Met sulfoxide reductase family.

The enzyme catalyses L-methionyl-[protein] + [thioredoxin]-disulfide + H2O = L-methionyl-(S)-S-oxide-[protein] + [thioredoxin]-dithiol. The catalysed reaction is [thioredoxin]-disulfide + L-methionine + H2O = L-methionine (S)-S-oxide + [thioredoxin]-dithiol. Has an important function as a repair enzyme for proteins that have been inactivated by oxidation. Catalyzes the reversible oxidation-reduction of methionine sulfoxide in proteins to methionine. The chain is Peptide methionine sulfoxide reductase MsrA from Pseudomonas fluorescens.